A 259-amino-acid polypeptide reads, in one-letter code: uncharacterized protein (259 aa).

The ABC transporter domain occupies 4 to 243 (INLKNINLTR…KILTDFYQEK (240 aa)). 36-43 (GLNGSGKS) provides a ligand contact to ATP.

Belongs to the ABC transporter superfamily.

This is an uncharacterized protein from Lactococcus lactis subsp. lactis (strain IL1403) (Streptococcus lactis).